A 287-amino-acid polypeptide reads, in one-letter code: Putative sugar uptake protein M6_Spy1874 (287 aa).

10 helical membrane passes run 4-26, 33-50, 55-72, 85-107, 117-134, 154-171, 181-200, 207-229, 234-256, and 268-285; these read IFYA…KIGG, LGMT…WLIV, TLQL…WSIG, VSVA…GVLV, FVVG…FYFS, FRAL…AVLF, SVIL…FMSF, YVIK…LLAA, LAIA…ILFL, and VVTG…LGVV.

The protein belongs to the GRP transporter (TC 2.A.7.5) family.

It localises to the cell membrane. The polypeptide is Putative sugar uptake protein M6_Spy1874 (Streptococcus pyogenes serotype M6 (strain ATCC BAA-946 / MGAS10394)).